We begin with the raw amino-acid sequence, 164 residues long: Ecotin (164 aa).

A signal peptide spans 1 to 20 (MKMFVPAVVFAALASASAWA). Cysteines 72 and 109 form a disulfide.

This sequence belongs to the protease inhibitor I11 (ecotin) family. Homodimer.

The protein localises to the periplasm. General inhibitor of pancreatic serine proteases: inhibits chymotrypsin, trypsin, elastases, factor X, kallikrein as well as a variety of other proteases. This Salmonella paratyphi A (strain ATCC 9150 / SARB42) protein is Ecotin.